A 612-amino-acid chain; its full sequence is Dihydroxy-acid dehydratase (612 aa).

D81 is a binding site for Mg(2+). C122 provides a ligand contact to [2Fe-2S] cluster. Residues D123 and K124 each coordinate Mg(2+). K124 is subject to N6-carboxylysine. A [2Fe-2S] cluster-binding site is contributed by C193. Mg(2+) is bound at residue E489. The active-site Proton acceptor is S515.

It belongs to the IlvD/Edd family. Homodimer. [2Fe-2S] cluster is required as a cofactor. The cofactor is Mg(2+).

It carries out the reaction (2R)-2,3-dihydroxy-3-methylbutanoate = 3-methyl-2-oxobutanoate + H2O. The catalysed reaction is (2R,3R)-2,3-dihydroxy-3-methylpentanoate = (S)-3-methyl-2-oxopentanoate + H2O. The protein operates within amino-acid biosynthesis; L-isoleucine biosynthesis; L-isoleucine from 2-oxobutanoate: step 3/4. Its pathway is amino-acid biosynthesis; L-valine biosynthesis; L-valine from pyruvate: step 3/4. Functions in the biosynthesis of branched-chain amino acids. Catalyzes the dehydration of (2R,3R)-2,3-dihydroxy-3-methylpentanoate (2,3-dihydroxy-3-methylvalerate) into 2-oxo-3-methylpentanoate (2-oxo-3-methylvalerate) and of (2R)-2,3-dihydroxy-3-methylbutanoate (2,3-dihydroxyisovalerate) into 2-oxo-3-methylbutanoate (2-oxoisovalerate), the penultimate precursor to L-isoleucine and L-valine, respectively. This Xanthomonas oryzae pv. oryzae (strain MAFF 311018) protein is Dihydroxy-acid dehydratase.